Reading from the N-terminus, the 513-residue chain is GMP synthase [glutamine-hydrolyzing] (513 aa).

A Glutamine amidotransferase type-1 domain is found at 9 to 198 (LILVLDFGSQ…VRRVCDCRGQ (190 aa)). C86 serves as the catalytic Nucleophile. Catalysis depends on residues H172 and E174. Residues 199 to 388 (WTMENFIEIE…LGIPEHLVWR (190 aa)) form the GMPS ATP-PPase domain. 226-232 (SGGVDSS) provides a ligand contact to ATP.

Homodimer.

The catalysed reaction is XMP + L-glutamine + ATP + H2O = GMP + L-glutamate + AMP + diphosphate + 2 H(+). The protein operates within purine metabolism; GMP biosynthesis; GMP from XMP (L-Gln route): step 1/1. Functionally, catalyzes the synthesis of GMP from XMP. The chain is GMP synthase [glutamine-hydrolyzing] from Staphylococcus aureus (strain USA300).